Here is a 300-residue protein sequence, read N- to C-terminus: Ribosomal protein bS6--L-glutamate ligase (300 aa).

Positions 104–287 (MQLLARQGID…IAGKMIRWIE (184 aa)) constitute an ATP-grasp domain. ATP-binding positions include lysine 141, 178–179 (EY), aspartate 187, and 211–213 (RSN). Positions 248, 260, and 262 each coordinate Mg(2+). Mn(2+) is bound by residues aspartate 248, glutamate 260, and asparagine 262.

The protein belongs to the RimK family. It depends on Mg(2+) as a cofactor. The cofactor is Mn(2+).

Its function is as follows. An L-glutamate ligase that catalyzes the ATP-dependent post-translational addition of glutamate residues to the C-terminus of ribosomal protein bS6 (RpsF). Is also able to catalyze the synthesis of poly-alpha-glutamate in vitro, via ATP hydrolysis from unprotected glutamate as substrate. The number of glutamate residues added to either RpsF or to poly-alpha-glutamate changes with pH. This chain is Ribosomal protein bS6--L-glutamate ligase, found in Shigella boydii serotype 18 (strain CDC 3083-94 / BS512).